A 562-amino-acid chain; its full sequence is Glutamine--tRNA ligase (562 aa).

The short motif at 35–45 (PEPNGYLHIGH) is the 'HIGH' region element. Residues 36-38 (EPN) and 42-48 (HIGHAKS) each bind ATP. Residues Asp68 and Tyr213 each contribute to the L-glutamine site. ATP is bound by residues Thr232, 262 to 263 (RL), and 270 to 272 (LSK). Positions 269–273 (ILSKR) match the 'KMSKS' region motif.

This sequence belongs to the class-I aminoacyl-tRNA synthetase family. In terms of assembly, monomer.

The protein resides in the cytoplasm. It catalyses the reaction tRNA(Gln) + L-glutamine + ATP = L-glutaminyl-tRNA(Gln) + AMP + diphosphate. This Buchnera aphidicola subsp. Schizaphis graminum (strain Sg) protein is Glutamine--tRNA ligase.